Consider the following 1331-residue polypeptide: Probable serine/threonine-protein kinase DDB_G0272254 (1331 aa).

3 stretches are compositionally biased toward low complexity: residues 1-42 (METS…NSSS), 96-116 (NDNN…NNNN), and 153-175 (TQQT…STPS). Disordered stretches follow at residues 1–43 (METS…SSSA), 92–132 (DKIC…QQIS), and 150–175 (ILNT…STPS). Helical transmembrane passes span 201–221 (FGFS…IYIL) and 224–244 (FVLK…FVIY). Residues 259–287 (SINDSDSSSNNNNNNNNTTTTNNDSASTK) show a composition bias toward low complexity. 4 disordered regions span residues 259 to 300 (SIND…PETY), 320 to 419 (NLNN…LSKE), 435 to 464 (SVGK…SHNI), and 512 to 581 (AHSN…VVGN). The segment covering 288 to 299 (GNNNNEISSPET) has biased composition (polar residues). Residues 436–450 (VGKTHNRSSSGSDSI) are compositionally biased toward polar residues. Low complexity predominate over residues 514-531 (SNNNNNNNNSNTNNNNNN). A compositionally biased stretch (polar residues) spans 532-555 (QSVSAPVSQLATPVYQTPGTNSVV). A compositionally biased stretch (low complexity) spans 557–577 (NLENDNENNNDSFSDINDNNS). Kelch repeat units lie at residues 665 to 710 (SLVL…NHDY), 716 to 769 (KFYL…RYGN), 770 to 816 (RFLL…GHTS), 822 to 868 (KLII…ELND), 909 to 959 (NIVM…LIKN), and 962 to 1008 (KLFI…NNNN). The segment covering 834–860 (NNNNNNNNNNNNNNNNNNNNNNNNNNN) has biased composition (low complexity). The segment at 834 to 862 (NNNNNNNNNNNNNNNNNNNNNNNNNNNKG) is disordered. A disordered region spans residues 976 to 1042 (NNNSSSGGNN…NNNNNNNNNN (67 aa)). The 259-residue stretch at 1073–1331 (IKIDKEIGKG…EITNYLTKTF (259 aa)) folds into the Protein kinase domain. ATP contacts are provided by residues 1079-1087 (IGKGHFSKV) and K1100. The active-site Proton acceptor is the D1200.

This sequence belongs to the protein kinase superfamily. TKL Ser/Thr protein kinase family.

Its subcellular location is the membrane. It catalyses the reaction L-seryl-[protein] + ATP = O-phospho-L-seryl-[protein] + ADP + H(+). The enzyme catalyses L-threonyl-[protein] + ATP = O-phospho-L-threonyl-[protein] + ADP + H(+). In Dictyostelium discoideum (Social amoeba), this protein is Probable serine/threonine-protein kinase DDB_G0272254.